Consider the following 955-residue polypeptide: Eukaryotic translation initiation factor 3 subunit A (955 aa).

Residues 96-127 (LSLAEQRVTDAQAQADKIADEEEADDLEAEET) are a coiled coil. The region spanning 325-498 (YQRVASFVLL…RSVLFEEVRA (174 aa)) is the PCI domain. Coiled-coil stretches lie at residues 533-636 (AEAR…INAK) and 752-860 (KREA…KRAG). The segment covering 789–858 (RAEEEAKAAA…ELEAKLEAKR (70 aa)) has biased composition (basic and acidic residues). Residues 789-955 (RAEEEAKAAA…GRYIPPSQRN (167 aa)) form a disordered region.

The protein belongs to the eIF-3 subunit A family. Component of the eukaryotic translation initiation factor 3 (eIF-3) complex.

It localises to the cytoplasm. Its function is as follows. RNA-binding component of the eukaryotic translation initiation factor 3 (eIF-3) complex, which is involved in protein synthesis of a specialized repertoire of mRNAs and, together with other initiation factors, stimulates binding of mRNA and methionyl-tRNAi to the 40S ribosome. The eIF-3 complex specifically targets and initiates translation of a subset of mRNAs involved in cell proliferation. The protein is Eukaryotic translation initiation factor 3 subunit A of Yarrowia lipolytica (strain CLIB 122 / E 150) (Yeast).